A 192-amino-acid chain; its full sequence is Superoxide dismutase [Fe] (192 aa).

His-26, His-73, Asp-157, and His-161 together coordinate Fe cation.

Belongs to the iron/manganese superoxide dismutase family. In terms of assembly, homodimer. The cofactor is Fe cation.

The enzyme catalyses 2 superoxide + 2 H(+) = H2O2 + O2. In terms of biological role, destroys superoxide anion radicals which are normally produced within the cells and which are toxic to biological systems. This Pseudoalteromonas translucida (strain TAC 125) protein is Superoxide dismutase [Fe].